We begin with the raw amino-acid sequence, 199 residues long: Urease accessory protein UreG (199 aa).

Residue Gly-8–Thr-15 participates in GTP binding.

This sequence belongs to the SIMIBI class G3E GTPase family. UreG subfamily. In terms of assembly, homodimer. UreH, UreF and UreG form a complex that acts as a GTP-hydrolysis-dependent molecular chaperone, activating the urease apoprotein by helping to assemble the nickel containing metallocenter of UreC. The UreE protein probably delivers the nickel.

It is found in the cytoplasm. Facilitates the functional incorporation of the urease nickel metallocenter. This process requires GTP hydrolysis, probably effectuated by UreG. The chain is Urease accessory protein UreG from Helicobacter pylori (strain P12).